The chain runs to 948 residues: Alanine--tRNA ligase (948 aa).

Zn(2+)-binding residues include His638, His642, Cys739, and His743.

Belongs to the class-II aminoacyl-tRNA synthetase family. It depends on Zn(2+) as a cofactor.

The protein localises to the cytoplasm. The enzyme catalyses tRNA(Ala) + L-alanine + ATP = L-alanyl-tRNA(Ala) + AMP + diphosphate. Its function is as follows. Catalyzes the attachment of alanine to tRNA(Ala) in a two-step reaction: alanine is first activated by ATP to form Ala-AMP and then transferred to the acceptor end of tRNA(Ala). Also edits incorrectly charged Ser-tRNA(Ala) and Gly-tRNA(Ala) via its editing domain. The polypeptide is Alanine--tRNA ligase (Paracidovorax citrulli (strain AAC00-1) (Acidovorax citrulli)).